The following is a 324-amino-acid chain: Phospho-N-acetylmuramoyl-pentapeptide-transferase (324 aa).

9 helical membrane passes run 13–33, 59–79, 85–105, 121–141, 143–163, 179–199, 201–221, 243–263, and 303–323; these read VLSA…IFIP, PTMG…IIGY, GMVV…DDIL, MILL…NIGT, IIIP…PLVV, IDGL…IVGF, TGHY…LGFL, AIAT…VGGI, and VKLV…GFIA.

The protein belongs to the glycosyltransferase 4 family. MraY subfamily. The cofactor is Mg(2+).

It localises to the cell membrane. The enzyme catalyses UDP-N-acetyl-alpha-D-muramoyl-L-alanyl-gamma-D-glutamyl-meso-2,6-diaminopimeloyl-D-alanyl-D-alanine + di-trans,octa-cis-undecaprenyl phosphate = di-trans,octa-cis-undecaprenyl diphospho-N-acetyl-alpha-D-muramoyl-L-alanyl-D-glutamyl-meso-2,6-diaminopimeloyl-D-alanyl-D-alanine + UMP. It functions in the pathway cell wall biogenesis; peptidoglycan biosynthesis. In terms of biological role, catalyzes the initial step of the lipid cycle reactions in the biosynthesis of the cell wall peptidoglycan: transfers peptidoglycan precursor phospho-MurNAc-pentapeptide from UDP-MurNAc-pentapeptide onto the lipid carrier undecaprenyl phosphate, yielding undecaprenyl-pyrophosphoryl-MurNAc-pentapeptide, known as lipid I. This chain is Phospho-N-acetylmuramoyl-pentapeptide-transferase, found in Clostridium botulinum (strain Alaska E43 / Type E3).